We begin with the raw amino-acid sequence, 302 residues long: 4-hydroxy-tetrahydrodipicolinate synthase (302 aa).

Residue T49 coordinates pyruvate. The active-site Proton donor/acceptor is the Y137. K166 serves as the catalytic Schiff-base intermediate with substrate. I208 provides a ligand contact to pyruvate.

Belongs to the DapA family. In terms of assembly, homotetramer; dimer of dimers.

The protein resides in the cytoplasm. The enzyme catalyses L-aspartate 4-semialdehyde + pyruvate = (2S,4S)-4-hydroxy-2,3,4,5-tetrahydrodipicolinate + H2O + H(+). Its pathway is amino-acid biosynthesis; L-lysine biosynthesis via DAP pathway; (S)-tetrahydrodipicolinate from L-aspartate: step 3/4. Functionally, catalyzes the condensation of (S)-aspartate-beta-semialdehyde [(S)-ASA] and pyruvate to 4-hydroxy-tetrahydrodipicolinate (HTPA). This chain is 4-hydroxy-tetrahydrodipicolinate synthase, found in Chloroherpeton thalassium (strain ATCC 35110 / GB-78).